Here is a 260-residue protein sequence, read N- to C-terminus: tRNA pseudouridine synthase C (260 aa).

Asp-54 is a catalytic residue.

This sequence belongs to the pseudouridine synthase RluA family.

It carries out the reaction uridine(65) in tRNA = pseudouridine(65) in tRNA. Responsible for synthesis of pseudouridine from uracil-65 in transfer RNAs. The protein is tRNA pseudouridine synthase C (truC) of Escherichia coli (strain K12).